Consider the following 41-residue polypeptide: Antifungal peptide 2 (41 aa).

Position 1 is a pyrrolidone carboxylic acid (Gln-1). Disulfide bonds link Cys-3/Cys-17, Cys-7/Cys-37, Cys-11/Cys-23, Cys-16/Cys-30, and Cys-35/Cys-39. A Chitin-binding type-1 domain is found at Ala-4–Gly-41.

As to quaternary structure, monomer.

Its function is as follows. Has antifungal activity against P.infestans, A.lycopersici, V.dahliae, G.zeae, A.nicotianae, F.moniliforme, F.oxysporum and C.gossypii. The chain is Antifungal peptide 2 from Eucommia ulmoides (Hardy rubber tree).